The chain runs to 213 residues: Glycerol-3-phosphate acyltransferase (213 aa).

The next 6 helical transmembrane spans lie at 3–23 (IIIL…GLWI), 48–68 (ILGV…GTLA), 71–91 (LPLI…LAVI), 119–139 (PFFL…FSMI), 144–164 (VVAA…GFIL), and 165–185 (TSYD…IIFR).

Belongs to the PlsY family. In terms of assembly, probably interacts with PlsX.

It is found in the cell membrane. It carries out the reaction an acyl phosphate + sn-glycerol 3-phosphate = a 1-acyl-sn-glycero-3-phosphate + phosphate. The protein operates within lipid metabolism; phospholipid metabolism. Catalyzes the transfer of an acyl group from acyl-phosphate (acyl-PO(4)) to glycerol-3-phosphate (G3P) to form lysophosphatidic acid (LPA). This enzyme utilizes acyl-phosphate as fatty acyl donor, but not acyl-CoA or acyl-ACP. The chain is Glycerol-3-phosphate acyltransferase from Lactococcus lactis subsp. cremoris (strain MG1363).